The chain runs to 361 residues: NADP-dependent alcohol dehydrogenase 7 (361 aa).

A Zn(2+)-binding site is contributed by Cys-46. 2 residues coordinate NADP(+): Gly-47 and His-51. The Zn(2+) site is built by His-68, Cys-100, Cys-103, Cys-106, Cys-114, and Cys-164. Residues Ile-189, Gly-191, Ile-192, Ser-211, Arg-212, Lys-216, Cys-251, Ser-253, Ser-256, Ile-276, Ser-300, and Ile-302 each contribute to the NADP(+) site. The residue at position 316 (Ser-316) is a Phosphoserine. Residue Arg-349 participates in NADP(+) binding.

This sequence belongs to the zinc-containing alcohol dehydrogenase family. As to quaternary structure, homodimer. Zn(2+) serves as cofactor.

The catalysed reaction is a primary alcohol + NADP(+) = an aldehyde + NADPH + H(+). It catalyses the reaction (E)-cinnamyl alcohol + NADP(+) = (E)-cinnamaldehyde + NADPH + H(+). The enzyme catalyses 3-methylbutanol + NADP(+) = 3-methylbutanal + NADPH + H(+). Its function is as follows. NADP-dependent alcohol dehydrogenase with a broad substrate specificity. The oxidative reactions are more than 100 times less efficient than the corresponding reductions, suggesting that the enzyme acts as an aldehyde reductase, rather than as an alcohol dehydrogenase. The protein is NADP-dependent alcohol dehydrogenase 7 (ADH7) of Saccharomyces cerevisiae (strain ATCC 204508 / S288c) (Baker's yeast).